Consider the following 332-residue polypeptide: Glyceraldehyde-3-phosphate dehydrogenase (332 aa).

NAD(+)-binding positions include 10–11 (RI), Asp32, and Met77. Residues 148-150 (SCT), Thr179, 208-209 (TG), and Arg231 contribute to the D-glyceraldehyde 3-phosphate site. Cys149 acts as the Nucleophile in catalysis. Asn313 is a binding site for NAD(+).

The protein belongs to the glyceraldehyde-3-phosphate dehydrogenase family. Homotetramer.

It is found in the cytoplasm. The enzyme catalyses D-glyceraldehyde 3-phosphate + phosphate + NAD(+) = (2R)-3-phospho-glyceroyl phosphate + NADH + H(+). The protein operates within carbohydrate degradation; glycolysis; pyruvate from D-glyceraldehyde 3-phosphate: step 1/5. The polypeptide is Glyceraldehyde-3-phosphate dehydrogenase (GPDA) (Phytophthora infestans (Potato late blight agent)).